A 243-amino-acid chain; its full sequence is Small ribosomal subunit protein uS2c (243 aa).

The segment at glycine 224–glutamine 243 is disordered.

This sequence belongs to the universal ribosomal protein uS2 family.

The protein localises to the plastid. Its subcellular location is the chloroplast. The sequence is that of Small ribosomal subunit protein uS2c (rps2) from Rhodomonas salina (Cryptomonas salina).